The following is a 146-amino-acid chain: uncharacterized protein (146 aa).

Transmembrane regions (helical) follow at residues 89 to 111 (AIEM…LLLY) and 121 to 143 (IGCG…YSVV).

The protein localises to the cell membrane. This is an uncharacterized protein from Archaeoglobus fulgidus (strain ATCC 49558 / DSM 4304 / JCM 9628 / NBRC 100126 / VC-16).